The chain runs to 202 residues: Josephin-1 (202 aa).

Residues 1–22 (MSCVPWKGDKAKAESSDLPQAA) are disordered. Position 15 is a phosphoserine (Ser-15). The Josephin domain occupies 23–202 (PPQIYHEKQR…EAHQSWRADV (180 aa)). Cys-36 serves as the catalytic Nucleophile. His-139 (proton acceptor) is an active-site residue.

As to quaternary structure, interacts with beta-actin/ACTB. Monoubiquitinated. Ubiquitination activates deubiquitination activity in vitro. Widely expressed (at protein level).

Its subcellular location is the cell membrane. The protein localises to the cytoplasm. The catalysed reaction is Thiol-dependent hydrolysis of ester, thioester, amide, peptide and isopeptide bonds formed by the C-terminal Gly of ubiquitin (a 76-residue protein attached to proteins as an intracellular targeting signal).. Deubiquitinates monoubiquitinated probes (in vitro). When ubiquitinated, cleaves 'Lys-63'-linked and 'Lys-48'-linked poly-ubiquitin chains (in vitro), hence may act as a deubiquitinating enzyme. May increase macropinocytosis and suppress clathrin- and caveolae-mediated endocytosis. May enhance membrane dynamics and cell motility independently of its catalytic activity. This is Josephin-1 (Josd1) from Mus musculus (Mouse).